Reading from the N-terminus, the 383-residue chain is Acetylornithine deacetylase (383 aa).

H80 provides a ligand contact to Zn(2+). D82 is a catalytic residue. D112 contributes to the Zn(2+) binding site. E144 is a catalytic residue. Zn(2+) contacts are provided by E145, E169, and H355.

This sequence belongs to the peptidase M20A family. ArgE subfamily. In terms of assembly, homodimer. The cofactor is Zn(2+). Co(2+) is required as a cofactor. It depends on glutathione as a cofactor.

It localises to the cytoplasm. The catalysed reaction is N(2)-acetyl-L-ornithine + H2O = L-ornithine + acetate. The protein operates within amino-acid biosynthesis; L-arginine biosynthesis; L-ornithine from N(2)-acetyl-L-ornithine (linear): step 1/1. In terms of biological role, catalyzes the hydrolysis of the amide bond of N(2)-acetylated L-amino acids. Cleaves the acetyl group from N-acetyl-L-ornithine to form L-ornithine, an intermediate in L-arginine biosynthesis pathway, and a branchpoint in the synthesis of polyamines. In Escherichia coli O139:H28 (strain E24377A / ETEC), this protein is Acetylornithine deacetylase.